The primary structure comprises 80 residues: Translation initiation factor IF-1, chloroplastic (80 aa).

The 74-residue stretch at 1–74 (MKEQKWIHEG…TRGRIIYRLR (74 aa)) folds into the S1-like domain.

It belongs to the IF-1 family. Component of the 30S ribosomal translation pre-initiation complex which assembles on the 30S ribosome in the order IF-2 and IF-3, IF-1 and N-formylmethionyl-tRNA(fMet); mRNA recruitment can occur at any time during PIC assembly.

The protein localises to the plastid. It localises to the chloroplast. Functionally, one of the essential components for the initiation of protein synthesis. Stabilizes the binding of IF-2 and IF-3 on the 30S subunit to which N-formylmethionyl-tRNA(fMet) subsequently binds. Helps modulate mRNA selection, yielding the 30S pre-initiation complex (PIC). Upon addition of the 50S ribosomal subunit IF-1, IF-2 and IF-3 are released leaving the mature 70S translation initiation complex. The polypeptide is Translation initiation factor IF-1, chloroplastic (Illicium oligandrum (Star anise)).